Reading from the N-terminus, the 141-residue chain is Ribonuclease VapC38 (141 aa).

Positions 5 and 102 each coordinate Mg(2+).

This sequence belongs to the PINc/VapC protein family. Mg(2+) serves as cofactor.

The protein localises to the secreted. Toxic component of a type II toxin-antitoxin (TA) system. An RNase. Its cognate antitoxin is VapB38. The polypeptide is Ribonuclease VapC38 (Mycobacterium tuberculosis (strain ATCC 25618 / H37Rv)).